The following is a 186-amino-acid chain: Peptidyl-tRNA hydrolase (186 aa).

Tyr16 contributes to the tRNA binding site. His21 acts as the Proton acceptor in catalysis. TRNA contacts are provided by Tyr66, Asn68, and Asn114.

The protein belongs to the PTH family. As to quaternary structure, monomer.

Its subcellular location is the cytoplasm. It carries out the reaction an N-acyl-L-alpha-aminoacyl-tRNA + H2O = an N-acyl-L-amino acid + a tRNA + H(+). Hydrolyzes ribosome-free peptidyl-tRNAs (with 1 or more amino acids incorporated), which drop off the ribosome during protein synthesis, or as a result of ribosome stalling. In terms of biological role, catalyzes the release of premature peptidyl moieties from peptidyl-tRNA molecules trapped in stalled 50S ribosomal subunits, and thus maintains levels of free tRNAs and 50S ribosomes. The protein is Peptidyl-tRNA hydrolase of Ureaplasma parvum serovar 3 (strain ATCC 700970).